A 270-amino-acid polypeptide reads, in one-letter code: Imidazoleglycerol-phosphate dehydratase 1, chloroplastic (270 aa).

Residues 1–62 constitute a chloroplast transit peptide; sequence MELSSASAIL…QSQLRQSISC (62 aa). S63 carries the N-acetylserine modification. Substrate-binding positions include E84, 110–118, 136–140, R162, and R184; these read HMLDQLASH and HHTNE. The Mn(2+) site is built by H110, H136, H137, and E140. H208, H232, H233, and E236 together coordinate Mn(2+). Substrate contacts are provided by residues 232 to 240 and 262 to 264; these read HHIIEATFK and SSK. The disordered stretch occupies residues 250–270; it reads TETDPRRGGTIPSSKGVLSRS.

Belongs to the imidazoleglycerol-phosphate dehydratase family. The cofactor is Mn(2+).

Its subcellular location is the plastid. It is found in the chloroplast. It catalyses the reaction D-erythro-1-(imidazol-4-yl)glycerol 3-phosphate = 3-(imidazol-4-yl)-2-oxopropyl phosphate + H2O. It functions in the pathway amino-acid biosynthesis; L-histidine biosynthesis; L-histidine from 5-phospho-alpha-D-ribose 1-diphosphate: step 6/9. The polypeptide is Imidazoleglycerol-phosphate dehydratase 1, chloroplastic (Arabidopsis thaliana (Mouse-ear cress)).